Here is a 178-residue protein sequence, read N- to C-terminus: Neuroblastoma suppressor of tumorigenicity 1 (178 aa).

The N-terminal stretch at 1–16 (MLWVLVGTVLPVMLLA) is a signal peptide. 5 cysteine pairs are disulfide-bonded: Cys-34-Cys-84, Cys-48-Cys-98, Cys-58-Cys-117, Cys-62-Cys-119, and Cys-81-Cys-122. Residues 34-123 (CEAKNITQIV…IVHCSCQACG (90 aa)) form the CTCK domain. Residues 130–178 (GLNVYMQGEDGPGSQPGSHSHSHPHPGCQTPEPEEPPGAPQVEEEGAED) are disordered.

Belongs to the DAN family. In terms of assembly, homodimer. As to expression, most abundant in lung, brain, intestine and kidney.

It is found in the secreted. Its function is as follows. Possible candidate as a tumor suppressor gene of neuroblastoma. May play an important role in preventing cells from entering the final stage (G1/S) of the transformation process. The polypeptide is Neuroblastoma suppressor of tumorigenicity 1 (Nbl1) (Rattus norvegicus (Rat)).